The chain runs to 326 residues: dTDP-4-dehydro-6-deoxy-D-allose reductase (326 aa).

NADP(+) contacts are provided by residues 15–21 (GALGFIG) and 129–132 (MSSS). Tyr-160 acts as the Proton donor/acceptor in catalysis. Residues Lys-164 and 187 to 190 (PGNV) contribute to the NADP(+) site.

This sequence belongs to the NAD(P)-dependent epimerase/dehydratase family.

It carries out the reaction dTDP-6-deoxy-alpha-D-allose + NAD(+) = dTDP-4-dehydro-6-deoxy-alpha-D-allose + NADH + H(+). The enzyme catalyses dTDP-6-deoxy-alpha-D-allose + NADP(+) = dTDP-4-dehydro-6-deoxy-alpha-D-allose + NADPH + H(+). Functionally, catalyzes the stereospecific reduction of the C-4 keto group of dTDP-4-dehydro-6-deoxy-D-allose, leading to dTDP-6-deoxy-D-allose, an intermediate in the biosynthesis of the mycinose moiety of the chalcomycin antibiotic. This is dTDP-4-dehydro-6-deoxy-D-allose reductase (chmD) from Streptomyces bikiniensis.